We begin with the raw amino-acid sequence, 373 residues long: Spore coat polysaccharide biosynthesis protein SpsE (373 aa).

The 63-residue stretch at 305-367 folds into the AFP-like domain; sequence GIFTTAPIQK…GIVWDDILLK (63 aa).

Its pathway is spore coat biogenesis; spore coat polysaccharide biosynthesis. This chain is Spore coat polysaccharide biosynthesis protein SpsE (spsE), found in Bacillus subtilis (strain 168).